The following is a 320-amino-acid chain: Malate dehydrogenase (320 aa).

Residues Gly10–Gly15 and Asp34 contribute to the NAD(+) site. Residues Arg83 and Arg89 each coordinate substrate. NAD(+) contacts are provided by residues Asn96 and Ile119–Asn121. Asn121 and Arg152 together coordinate substrate. The active-site Proton acceptor is His176.

Belongs to the LDH/MDH superfamily. MDH type 3 family.

It carries out the reaction (S)-malate + NAD(+) = oxaloacetate + NADH + H(+). In terms of biological role, catalyzes the reversible oxidation of malate to oxaloacetate. The polypeptide is Malate dehydrogenase (Rhizobium meliloti (strain 1021) (Ensifer meliloti)).